Reading from the N-terminus, the 977-residue chain is Poly(ADP-ribose) glycohydrolase (977 aa).

The disordered stretch occupies residues 1-69; the sequence is MSAGPGCEPC…LGRAGQHRGS (69 aa). Positions 1–457 are A-domain; sequence MSAGPGCEPC…LSPDKKWLGT (457 aa). The Nuclear localization signal signature appears at 10-16; that stretch reads CTKRPRW. The span at 17-29 shows a compositional bias: low complexity; that stretch reads DAAATSPPAASDA. The residue at position 69 (serine 69) is a Phosphoserine. Positions 77–84 match the PIP-box (PCNA interacting peptide) motif; it reads QKTITSWM. Residues serine 138 and serine 198 each carry the phosphoserine modification. Residues 184-407 form a disordered region; the sequence is SNANVDQSSP…CRNSKQHGRK (224 aa). Basic and acidic residues-rich tracts occupy residues 192–207 and 223–234; these read SPKD…ESRD and TMEDEQGREARS. Phosphothreonine is present on threonine 200. Phosphoserine occurs at positions 262, 265, 287, 292, 299, 303, and 317. The span at 280–291 shows a compositional bias: polar residues; sequence NRLNRQESSLGN. Positions 317 to 332 are enriched in acidic residues; that stretch reads SEADEETSPGFDEQED. The segment covering 333 to 343 has biased composition (polar residues); the sequence is SSSAQTANKPS. Lysine 341 carries the post-translational modification N6-acetyllysine. Positions 346–356 are enriched in basic and acidic residues; sequence QPREADTELRK. Residue serine 449 is modified to Phosphoserine. A catalytic region spans residues 611–796; sequence QPIPLLKQKM…TEQYSEYTGY (186 aa). 727–728 contacts substrate; sequence IE. Residue aspartate 738 is part of the active site. The substrate site is built by asparagine 741 and glutamine 755. Residues glutamate 756 and glutamate 757 contribute to the active site. Substrate contacts are provided by residues tyrosine 796 and 870–875; that span reads NWGCGA.

Belongs to the poly(ADP-ribose) glycohydrolase family. As to quaternary structure, interacts with PCNA. Interacts with NUDT5.

Its subcellular location is the nucleus. It catalyses the reaction [(1''-&gt;2')-ADP-alpha-D-ribose](n) + H2O = [(1''-&gt;2')-ADP-alpha-D-ribose](n-1) + ADP-D-ribose. Functionally, poly(ADP-ribose) glycohydrolase that degrades poly(ADP-ribose) by hydrolyzing the ribose-ribose bonds present in poly(ADP-ribose). PARG acts both as an endo- and exoglycosidase, releasing poly(ADP-ribose) of different length as well as ADP-ribose monomers. It is however unable to cleave the ester bond between the terminal ADP-ribose and ADP-ribosylated residues, leaving proteins that are mono-ADP-ribosylated. Poly(ADP-ribose) is synthesized after DNA damage is only present transiently and is rapidly degraded by PARG. Required to prevent detrimental accumulation of poly(ADP-ribose) upon prolonged replicative stress, while it is not required for recovery from transient replicative stress. Responsible for the prevalence of mono-ADP-ribosylated proteins in cells, thanks to its ability to degrade poly(ADP-ribose) without cleaving the terminal protein-ribose bond. Required for retinoid acid-dependent gene transactivation, probably by removing poly(ADP-ribose) from histone demethylase KDM4D, allowing chromatin derepression at RAR-dependent gene promoters. Involved in the synthesis of ATP in the nucleus, together with PARP1, NMNAT1 and NUDT5. Nuclear ATP generation is required for extensive chromatin remodeling events that are energy-consuming. The protein is Poly(ADP-ribose) glycohydrolase of Bos taurus (Bovine).